Reading from the N-terminus, the 112-residue chain is CLAVATA3/ESR (CLE)-related protein 44 (112 aa).

Residues 1 to 39 (MATTIDQTSIKSLHFHQVIRLIITIIFLAFLFLIGPTSS) form the signal peptide. The disordered stretch occupies residues 41–112 (NHHLHESSSK…VPSGPNPISN (72 aa)). Over residues 62-71 (QPSTPSSSTM) the composition is skewed to polar residues. Residues Pro-104 and Pro-107 each carry the hydroxyproline modification. An O-linked (Ara...) hydroxyproline glycan is attached at Pro-107.

It belongs to the CLV3/ESR signal peptide family. Interacts specifically with the leucine-rich repeat receptor-like protein kinase TDR, especially in the presence of SERK2. The O-glycosylation (arabinosylation) of the hydroxyproline Pro-107 enhances binding affinity of the CLE44p peptide for its receptor. As to expression, mostly expressed in flowers and leaves. Widely expressed along the vascular strands. In roots and hypocotyls, present in endodermal cells as well as cells in the phloem and the adjacent pericycle.

It is found in the secreted. Its subcellular location is the extracellular space. Its function is as follows. Extracellular signal peptide that regulates cell fate. May act with TDR as a ligand-receptor pair in a signal transduction pathway that represses tracheary element differentiation but promotes the formation of procambial cells adjacent to phloem cells in the veins. Regulates the transition of protophloem cells from proliferation to differentiation, thus impinging on postembryonic growth capacity of the root meristem; this signaling pathway requires CRN and CLV2. In Arabidopsis thaliana (Mouse-ear cress), this protein is CLAVATA3/ESR (CLE)-related protein 44.